The following is a 436-amino-acid chain: Fasciclin-like arabinogalactan protein 15 (436 aa).

An N-terminal signal peptide occupies residues 1–20 (MDDLSKLLFFLLLTISITTA). FAS1 domains are found at residues 31-165 (NSNS…ERLL) and 249-392 (VKDF…DGVL). Asparagine 68 and asparagine 271 each carry an N-linked (GlcNAc...) asparagine glycan.

It belongs to the fasciclin-like AGP family.

It localises to the secreted. Functionally, may be a cell surface adhesion protein. The protein is Fasciclin-like arabinogalactan protein 15 (FLA15) of Arabidopsis thaliana (Mouse-ear cress).